The following is a 348-amino-acid chain: uncharacterized protein (348 aa).

The NADP(+) site is built by K41 and Y170. S339 is subject to Phosphoserine.

This sequence belongs to the NAD(P)-dependent epimerase/dehydratase family. Dihydroflavonol-4-reductase subfamily.

This is an uncharacterized protein from Saccharomyces cerevisiae (strain ATCC 204508 / S288c) (Baker's yeast).